The following is a 110-amino-acid chain: UPF0060 membrane protein Bamb_1160 (110 aa).

4 helical membrane-spanning segments follow: residues 9-29 (ALFA…WLVL), 34-54 (PVWL…LLTL), 66-86 (YGGV…GVAL), and 88-108 (RWDA…ALQP).

This sequence belongs to the UPF0060 family.

Its subcellular location is the cell inner membrane. The chain is UPF0060 membrane protein Bamb_1160 from Burkholderia ambifaria (strain ATCC BAA-244 / DSM 16087 / CCUG 44356 / LMG 19182 / AMMD) (Burkholderia cepacia (strain AMMD)).